The sequence spans 77 residues: Conotoxin Lt7.1 (77 aa).

Positions 1–19 (MEKLTILLLVAALLMSTQG) are cleaved as a signal peptide. Residues 20–49 (LIQSGGENRPKEKIKFLSKRKTVAESWWEG) constitute a propeptide that is removed on maturation. Disulfide bonds link Cys51-Cys65, Cys58-Cys69, and Cys64-Cys74.

It belongs to the conotoxin O2 superfamily. As to expression, expressed by the venom duct.

The protein localises to the secreted. The polypeptide is Conotoxin Lt7.1 (Conus litteratus (Lettered cone)).